Reading from the N-terminus, the 257-residue chain is BTB/POZ domain-containing protein KCTD1 (257 aa).

The disordered stretch occupies residues 1–25 (MSRPLITRSPASPLNNQGIPTPAQL). Phosphoserine is present on residues Ser-9 and Ser-12. The segment covering 9–25 (SPASPLNNQGIPTPAQL) has biased composition (polar residues). The BTB domain maps to 30–100 (APVHIDVGGH…LRTSKLLIPD (71 aa)).

Forms homopentamers. Interacts with KCTD15, probably forming heteropentamers depending on its abundance in a cell-type dependent manner. Interacts with TFAP2A, TFAP2B and TFAP2C via the BTB domain. Sumoylated.

It is found in the nucleus. In terms of biological role, may repress the transcriptional activity of AP-2 family members, including TFAP2A, TFAP2B and TFAP2C to various extent. In Rattus norvegicus (Rat), this protein is BTB/POZ domain-containing protein KCTD1 (Kctd1).